The sequence spans 498 residues: ATP synthase subunit beta, chloroplastic (498 aa).

Residue Thr6 is modified to Phosphothreonine. At Ser13 the chain carries Phosphoserine. 172–179 contacts ATP; that stretch reads GGAGVGKT.

The protein belongs to the ATPase alpha/beta chains family. As to quaternary structure, F-type ATPases have 2 components, CF(1) - the catalytic core - and CF(0) - the membrane proton channel. CF(1) has five subunits: alpha(3), beta(3), gamma(1), delta(1), epsilon(1). CF(0) has four main subunits: a(1), b(1), b'(1) and c(9-12).

The protein localises to the plastid. It localises to the chloroplast thylakoid membrane. The catalysed reaction is ATP + H2O + 4 H(+)(in) = ADP + phosphate + 5 H(+)(out). Functionally, produces ATP from ADP in the presence of a proton gradient across the membrane. The catalytic sites are hosted primarily by the beta subunits. This is ATP synthase subunit beta, chloroplastic from Capsella bursa-pastoris (Shepherd's purse).